An 83-amino-acid chain; its full sequence is MASGWGITGNKGRCYDFWMDFSECMSHCREPKDCTLLREDYLECLHHSKEFQRRNRIYKEEQRKLRAASRKGEETGDGTHTHH.

Positions 11–52 constitute a CHCH domain; the sequence is KGRCYDFWMDFSECMSHCREPKDCTLLREDYLECLHHSKEFQ. 2 consecutive short sequence motifs (cx9C motif) follow at residues 14–24 and 34–44; these read CYDFWMDFSEC and CTLLREDYLEC. 2 disulfide bridges follow: Cys-14/Cys-44 and Cys-24/Cys-34. The disordered stretch occupies residues 62 to 83; the sequence is QRKLRAASRKGEETGDGTHTHH.

This sequence belongs to the complex I NDUFS5 subunit family. In terms of assembly, complex I is composed of at least 49 different subunits. This is a component of the iron-sulfur (IP) fragment of the enzyme.

The protein resides in the mitochondrion. It is found in the mitochondrion inner membrane. It localises to the mitochondrion intermembrane space. Accessory subunit of the mitochondrial membrane respiratory chain NADH dehydrogenase (Complex I), that is believed not to be involved in catalysis. Complex I functions in the transfer of electrons from NADH to the respiratory chain. The immediate electron acceptor for the enzyme is believed to be ubiquinone. The protein is NADH dehydrogenase [ubiquinone] iron-sulfur protein 5-B of Arabidopsis thaliana (Mouse-ear cress).